The chain runs to 522 residues: GMP synthase [glutamine-hydrolyzing] (522 aa).

One can recognise a Glutamine amidotransferase type-1 domain in the interval 8–204 (RLLIIDFGSQ…FVRLAGFKGD (197 aa)). The Nucleophile role is filled by Cys86. Catalysis depends on residues His179 and Glu181. The 193-residue stretch at 205-397 (WTMGAYREEA…LGLPASFIGR (193 aa)) folds into the GMPS ATP-PPase domain. An ATP-binding site is contributed by 232–238 (SGGVDSS).

As to quaternary structure, homodimer.

The enzyme catalyses XMP + L-glutamine + ATP + H2O = GMP + L-glutamate + AMP + diphosphate + 2 H(+). It participates in purine metabolism; GMP biosynthesis; GMP from XMP (L-Gln route): step 1/1. Catalyzes the synthesis of GMP from XMP. This chain is GMP synthase [glutamine-hydrolyzing], found in Roseobacter denitrificans (strain ATCC 33942 / OCh 114) (Erythrobacter sp. (strain OCh 114)).